The chain runs to 543 residues: Chaperonin GroEL (543 aa).

ATP-binding positions include 29–32, lysine 50, 86–90, glycine 415, and aspartate 495; these read TLGP and DGTTT.

Belongs to the chaperonin (HSP60) family. Forms a cylinder of 14 subunits composed of two heptameric rings stacked back-to-back. Interacts with the co-chaperonin GroES.

The protein localises to the cytoplasm. It catalyses the reaction ATP + H2O + a folded polypeptide = ADP + phosphate + an unfolded polypeptide.. Functionally, together with its co-chaperonin GroES, plays an essential role in assisting protein folding. The GroEL-GroES system forms a nano-cage that allows encapsulation of the non-native substrate proteins and provides a physical environment optimized to promote and accelerate protein folding. The protein is Chaperonin GroEL of Karelsulcia muelleri (strain GWSS) (Sulcia muelleri).